The chain runs to 235 residues: High affinity immunoglobulin epsilon receptor subunit beta (235 aa).

The disordered stretch occupies residues 1–23 (MDTENRSRADLALPNPQESSSAP). Topologically, residues 1 to 51 (MDTENRSRADLALPNPQESSSAPDIELLEASPAKAAPPKQTWRTFLKKELE) are cytoplasmic. A helical transmembrane segment spans residues 52–71 (FLGATQILVGLICLCFGTIV). Topologically, residues 72–89 (CSVLYVSDFDEEVLLLYK) are extracellular. Residues 90 to 109 (LGYPFWGAVLFVLSGFLSII) form a helical membrane-spanning segment. The Cytoplasmic segment spans residues 110–122 (SERKNTLYLVRGS). A helical transmembrane segment spans residues 123 to 142 (LGANIVSSIAAGTGIAMLIL). The Extracellular portion of the chain corresponds to 143–171 (NLTNNFAYMNNCKNVTEDDGCFVASFTTE). The helical transmembrane segment at 172-191 (LVLMMLFLTILAFCSAVLFT) threads the bilayer. Over 192 to 235 (IYRIGQELESKKVPDDRLYEELNVYSPIYSELEDKGETSSPVDS) the chain is Cytoplasmic. Tyrosine 210 and tyrosine 216 each carry phosphotyrosine. The residue at position 217 (serine 217) is a Phosphoserine. Tyrosine 220 is modified (phosphotyrosine).

It belongs to the MS4A family. Tetramer of an alpha chain, a beta chain, and two disulfide linked gamma chains. Binds LILRB1. Interacts with FGR. Interacts with FGR and FES/FPS. Interacts with LYN. Post-translationally, phosphorylated on tyrosine residues by LYN.

It localises to the membrane. Its function is as follows. High affinity receptor that binds to the Fc region of immunoglobulins epsilon. Aggregation of FCER1 by multivalent antigens is required for the full mast cell response, including the release of preformed mediators (such as histamine) by degranulation and de novo production of lipid mediators and cytokines. Also mediates the secretion of important lymphokines. Binding of allergen to receptor-bound IgE leads to cell activation and the release of mediators responsible for the manifestations of allergy. The chain is High affinity immunoglobulin epsilon receptor subunit beta (Ms4a2) from Mus musculus (Mouse).